The chain runs to 621 residues: F-box only protein 21 (621 aa).

In terms of domain architecture, F-box spans 28–77 (SCLVNLPGEVLEYILCCGSLTAADIGRVSSTCRRLRELCQSSGKVWKEQF).

As to quaternary structure, interacts with SKP1 and CUL1.

Substrate-recognition component of the SCF (SKP1-CUL1-F-box protein)-type E3 ubiquitin ligase complex. This Pongo abelii (Sumatran orangutan) protein is F-box only protein 21 (FBXO21).